Here is a 63-residue protein sequence, read N- to C-terminus: DNA-directed RNA polymerase 7 kDa subunit (63 aa).

Belongs to the poxviridae DNA-directed RNA polymerase 7 kDa subunit family. In terms of assembly, the DNA-dependent RNA polymerase (vRNAP) consists of eight subunits encoded by early viral genes and termed according to their apparent molecular masses Rpo147, Rpo132, Rpo35, Rpo30, Rpo22, Rpo19, Rpo18, and Rpo7. The same holoenzyme, with the addition of the transcription-specificity factor RAP94, is used for early gene expression.

It is found in the virion. The catalysed reaction is RNA(n) + a ribonucleoside 5'-triphosphate = RNA(n+1) + diphosphate. Functionally, part of the DNA-dependent RNA polymerase which catalyzes the transcription of viral DNA into RNA using the four ribonucleoside triphosphates as substrates. Responsible for the transcription of early, intermediate and late genes. DNA-dependent RNA polymerase associates with the early transcription factor (ETF), itself composed of OPG118 and OPG134, thereby allowing the early genes transcription. Late transcription, and probably also intermediate transcription, require newly synthesized RNA polymerase. The polypeptide is DNA-directed RNA polymerase 7 kDa subunit (OPG090) (Monkeypox virus).